The primary structure comprises 408 residues: Argininosuccinate synthase (408 aa).

ATP-binding positions include 10 to 18 and Ala-37; that span reads AYSGGLDTS. Positions 90 and 95 each coordinate L-citrulline. Gly-120 contributes to the ATP binding site. L-aspartate contacts are provided by Thr-122, Asn-126, and Asp-127. Asn-126 is an L-citrulline binding site. Residues Arg-130, Ser-181, Ser-190, Glu-266, and Tyr-278 each contribute to the L-citrulline site.

It belongs to the argininosuccinate synthase family. Type 1 subfamily. Homotetramer.

The protein localises to the cytoplasm. The catalysed reaction is L-citrulline + L-aspartate + ATP = 2-(N(omega)-L-arginino)succinate + AMP + diphosphate + H(+). It functions in the pathway amino-acid biosynthesis; L-arginine biosynthesis; L-arginine from L-ornithine and carbamoyl phosphate: step 2/3. The polypeptide is Argininosuccinate synthase (Cereibacter sphaeroides (strain ATCC 17029 / ATH 2.4.9) (Rhodobacter sphaeroides)).